Reading from the N-terminus, the 237-residue chain is Pyridoxal phosphate homeostasis protein (237 aa).

N6-(pyridoxal phosphate)lysine is present on lysine 31.

It belongs to the pyridoxal phosphate-binding protein YggS/PROSC family.

The protein localises to the cytoplasm. It localises to the nucleus. Its function is as follows. Pyridoxal 5'-phosphate (PLP)-binding protein, which may be involved in intracellular homeostatic regulation of pyridoxal 5'-phosphate (PLP), the active form of vitamin B6. The chain is Pyridoxal phosphate homeostasis protein from Schizosaccharomyces pombe (strain 972 / ATCC 24843) (Fission yeast).